Reading from the N-terminus, the 562-residue chain is Dihydroxy-acid dehydratase 1 (562 aa).

A Mg(2+)-binding site is contributed by aspartate 80. Cysteine 121 is a [2Fe-2S] cluster binding site. Mg(2+) is bound by residues aspartate 122 and lysine 123. An N6-carboxylysine modification is found at lysine 123. Cysteine 194 contacts [2Fe-2S] cluster. Glutamate 446 contributes to the Mg(2+) binding site. Serine 472 serves as the catalytic Proton acceptor.

Belongs to the IlvD/Edd family. As to quaternary structure, homodimer. Requires [2Fe-2S] cluster as cofactor. Mg(2+) serves as cofactor.

It carries out the reaction (2R)-2,3-dihydroxy-3-methylbutanoate = 3-methyl-2-oxobutanoate + H2O. It catalyses the reaction (2R,3R)-2,3-dihydroxy-3-methylpentanoate = (S)-3-methyl-2-oxopentanoate + H2O. The protein operates within amino-acid biosynthesis; L-isoleucine biosynthesis; L-isoleucine from 2-oxobutanoate: step 3/4. It participates in amino-acid biosynthesis; L-valine biosynthesis; L-valine from pyruvate: step 3/4. Its function is as follows. Functions in the biosynthesis of branched-chain amino acids. Catalyzes the dehydration of (2R,3R)-2,3-dihydroxy-3-methylpentanoate (2,3-dihydroxy-3-methylvalerate) into 2-oxo-3-methylpentanoate (2-oxo-3-methylvalerate) and of (2R)-2,3-dihydroxy-3-methylbutanoate (2,3-dihydroxyisovalerate) into 2-oxo-3-methylbutanoate (2-oxoisovalerate), the penultimate precursor to L-isoleucine and L-valine, respectively. The protein is Dihydroxy-acid dehydratase 1 of Staphylococcus saprophyticus subsp. saprophyticus (strain ATCC 15305 / DSM 20229 / NCIMB 8711 / NCTC 7292 / S-41).